A 376-amino-acid chain; its full sequence is Cytoplasmic tRNA 2-thiolation protein 2 (376 aa).

The protein belongs to the CTU2/NCS2 family.

It is found in the cytoplasm. Its pathway is tRNA modification; 5-methoxycarbonylmethyl-2-thiouridine-tRNA biosynthesis. Its function is as follows. Plays a central role in 2-thiolation of mcm(5)S(2)U at tRNA wobble positions of tRNA(Lys), tRNA(Glu) and tRNA(Gln). May act by forming a heterodimer with NCS6 that ligates sulfur from thiocarboxylated URM1 onto the uridine of tRNAs at wobble position. Prior mcm(5) tRNA modification by the elongator complex is required for 2-thiolation. May also be involved in protein urmylation. This Coccidioides immitis (strain RS) (Valley fever fungus) protein is Cytoplasmic tRNA 2-thiolation protein 2.